Here is a 419-residue protein sequence, read N- to C-terminus: UDP-N-acetylglucosamine 1-carboxyvinyltransferase 2 (419 aa).

24–25 (KN) is a phosphoenolpyruvate binding site. Arg94 lines the UDP-N-acetyl-alpha-D-glucosamine pocket. Cys118 functions as the Proton donor in the catalytic mechanism. Residue Cys118 is modified to 2-(S-cysteinyl)pyruvic acid O-phosphothioketal. UDP-N-acetyl-alpha-D-glucosamine contacts are provided by residues 123-127 (RPIDQ), Asp307, and Ile329.

It belongs to the EPSP synthase family. MurA subfamily.

It localises to the cytoplasm. It catalyses the reaction phosphoenolpyruvate + UDP-N-acetyl-alpha-D-glucosamine = UDP-N-acetyl-3-O-(1-carboxyvinyl)-alpha-D-glucosamine + phosphate. It functions in the pathway cell wall biogenesis; peptidoglycan biosynthesis. Its function is as follows. Cell wall formation. Adds enolpyruvyl to UDP-N-acetylglucosamine. The chain is UDP-N-acetylglucosamine 1-carboxyvinyltransferase 2 from Staphylococcus aureus (strain MRSA252).